The sequence spans 1412 residues: Cardiac-enriched FHL2-interacting protein (1412 aa).

Disordered stretches follow at residues 106–177, 202–443, 460–500, 517–848, 877–923, 935–1255, and 1344–1412; these read VQGE…PKFA, VSNT…YNPP, LETS…SKAP, YSPL…TNKH, SEDS…VPGT, EDPV…YPAT, and RQGS…EGVS. The residue at position 120 (Thr-120) is a Phosphothreonine. Low complexity predominate over residues 135 to 145; it reads SSSKPISKVSS. The segment covering 161–171 has biased composition (pro residues); it reads RPPPSKPPALK. The span at 202-212 shows a compositional bias: polar residues; that stretch reads VSNTHQGSHQS. Basic and acidic residues-rich tracts occupy residues 285-299 and 306-316; these read WDTH…KDIA and KAPKHYEDMPL. A Phosphoserine modification is found at Ser-328. Residues 343–352 show a composition bias toward polar residues; it reads SPSGSQSTSG. The segment covering 378–389 has biased composition (basic residues); sequence KRSKAPWRKPKT. A Phosphoserine modification is found at Ser-473. 2 stretches are compositionally biased toward basic and acidic residues: residues 482-496 and 525-538; these read QEKE…DSYK and GFDE…DSKQ. Over residues 587-612 the composition is skewed to low complexity; it reads SHPTFSSPSASSQTHFCVNGEAAESN. Residues 632–641 are compositionally biased toward basic and acidic residues; the sequence is GHPDCRENLP. 3 stretches are compositionally biased toward polar residues: residues 670–679, 687–697, and 712–722; these read NGLSRSVSQE, GFQSLPLNQKF, and SDSQSDFTPCR. The segment covering 728–741 has biased composition (low complexity); the sequence is FSTSSSDQSFASFE. Basic and acidic residues predominate over residues 753-799; sequence QEDRKSHVSAGDKQRDETAVEKEESQQCASRNEHRGVDEQRQEEIQR. The residue at position 813 (Ser-813) is a Phosphoserine. Residues 826 to 837 are compositionally biased toward basic and acidic residues; that stretch reads ADKDTAHTHAKD. 3 stretches are compositionally biased toward polar residues: residues 904–921, 943–953, and 1047–1066; these read ASES…NDVP, QDETSQQTRKG, and AETS…SPAA. Residues 1164–1175 are compositionally biased toward basic residues; the sequence is RRAKKLASKRRK. A compositionally biased stretch (basic and acidic residues) spans 1176 to 1203; sequence SDQLLEKHTEAWEGKSFTEDTQGTERRP. Positions 1401–1412 are enriched in acidic residues; that stretch reads DDLEDFATEGVS.

Interacts with FHL2. In terms of tissue distribution, expressed in the heart and skeletal muscle (at protein level).

It localises to the cytoplasm. It is found in the myofibril. The protein localises to the sarcomere. Its subcellular location is the z line. Functionally, plays an important role in cardiomyocyte hypertrophy via activation of the calcineurin/NFAT signaling pathway. The polypeptide is Cardiac-enriched FHL2-interacting protein (Mus musculus (Mouse)).